The sequence spans 160 residues: G-protein-signaling modulator 3 (160 aa).

Positions 1-55 (MEAERPQEEEDGEQGPPQDEEGWPPPNSTTRPWRSAPPSPPPPGTRHTALGPRSA) are disordered. The segment covering 7-22 (QEEEDGEQGPPQDEEG) has biased composition (acidic residues). Phosphoserine occurs at positions 35, 39, 56, and 59. Residues 35-44 (SAPPSPPPPG) are compositionally biased toward pro residues. At Thr-62 the chain carries Phosphothreonine. 3 consecutive GoLoco domains span residues 62–84 (TELL…RATF), 104–126 (REQL…RSEP), and 132–155 (GQEL…RSRP).

Expressed in heart, placenta, lung and liver.

It localises to the cytoplasm. Its function is as follows. Interacts with subunit of G(i) alpha proteins and regulates the activation of G(i) alpha proteins. The sequence is that of G-protein-signaling modulator 3 (GPSM3) from Homo sapiens (Human).